The following is a 187-amino-acid chain: Phosphatidylethanolamine-binding protein 1 (187 aa).

Position 2 is an N-acetylalanine; in peptide hippocampal cholinergic neurostimulating (Ala-2). A phosphoserine mark is found at Ser-6 and Ser-13. Thr-42 carries the phosphothreonine modification. Residues Ser-52, Ser-54, Ser-98, and Ser-153 each carry the phosphoserine modification. The tract at residues 93-134 is interaction with RAF1; sequence KGNDISSGTVLSEYVGSGPPKDTGLHRYVWLVYEQEQPLNCD.

Belongs to the phosphatidylethanolamine-binding protein family. As to quaternary structure, has a tendency to form dimers by disulfide cross-linking. Interacts with RAF1 and this interaction is enhanced if RAF1 is phosphorylated on residues 'Ser-338', 'Ser-339', 'Tyr-340' and 'Tyr-341'. Interacts with ALOX15; in response to IL13/interleukin-13, prevents the interaction of PEBP1 with RAF1 to activate the ERK signaling cascade. In terms of tissue distribution, major component of epididymal secretions and sperm plasma membranes. It is present in cytosols from a variety of other tissues. Highly expressed in brain.

Its subcellular location is the cytoplasm. The protein localises to the membrane. Functionally, binds ATP, opioids and phosphatidylethanolamine. Has lower affinity for phosphatidylinositol and phosphatidylcholine. Serine protease inhibitor which inhibits thrombin, neuropsin and chymotrypsin but not trypsin, tissue type plasminogen activator and elastase. Inhibits the kinase activity of RAF1 by inhibiting its activation and by dissociating the RAF1/MEK complex and acting as a competitive inhibitor of MEK phosphorylation. HCNP may be involved in the function of the presynaptic cholinergic neurons of the central nervous system. HCNP increases the production of choline acetyltransferase but not acetylcholinesterase. Seems to be mediated by a specific receptor. The sequence is that of Phosphatidylethanolamine-binding protein 1 (Pebp1) from Rattus norvegicus (Rat).